We begin with the raw amino-acid sequence, 112 residues long: Nitrogen regulatory protein P-II (112 aa).

Position 51 is an O-UMP-tyrosine (Y51).

Belongs to the P(II) protein family. Homotrimer.

In nitrogen-limiting conditions, when the ratio of Gln to 2-ketoglutarate decreases, P-II is uridylylated to P-II-UMP. P-II-UMP allows the deadenylation of glutamine synthetase (GS), thus activating the enzyme. Conversely, in nitrogen excess P-II is deuridylated and promotes the adenylation of GS. P-II indirectly controls the transcription of the GS gene (glnA). P-II prevents NR-II-catalyzed conversion of NR-I to NR-I-phosphate, the transcriptional activator of glnA. When P-II is uridylylated to P-II-UMP, these events are reversed. The sequence is that of Nitrogen regulatory protein P-II (glnB) from Rhizobium etli (strain ATCC 51251 / DSM 11541 / JCM 21823 / NBRC 15573 / CFN 42).